The sequence spans 175 residues: Acireductone dioxygenase (175 aa).

Residues histidine 81, histidine 83, glutamate 87, and histidine 126 each contribute to the Fe(2+) site. Ni(2+) contacts are provided by histidine 81, histidine 83, glutamate 87, and histidine 126.

It belongs to the acireductone dioxygenase (ARD) family. Fe(2+) serves as cofactor. It depends on Ni(2+) as a cofactor.

The protein localises to the cytoplasm. The protein resides in the nucleus. The enzyme catalyses 1,2-dihydroxy-5-(methylsulfanyl)pent-1-en-3-one + O2 = 4-methylsulfanyl-2-oxobutanoate + formate + 2 H(+). It carries out the reaction 1,2-dihydroxy-5-(methylsulfanyl)pent-1-en-3-one + O2 = 3-(methylsulfanyl)propanoate + CO + formate + 2 H(+). It functions in the pathway amino-acid biosynthesis; L-methionine biosynthesis via salvage pathway; L-methionine from S-methyl-5-thio-alpha-D-ribose 1-phosphate: step 5/6. In terms of biological role, catalyzes 2 different reactions between oxygen and the acireductone 1,2-dihydroxy-3-keto-5-methylthiopentene (DHK-MTPene) depending upon the metal bound in the active site. Fe-containing acireductone dioxygenase (Fe-ARD) produces formate and 2-keto-4-methylthiobutyrate (KMTB), the alpha-ketoacid precursor of methionine in the methionine recycle pathway. Ni-containing acireductone dioxygenase (Ni-ARD) produces methylthiopropionate, carbon monoxide and formate, and does not lie on the methionine recycle pathway. The sequence is that of Acireductone dioxygenase from Phaeosphaeria nodorum (strain SN15 / ATCC MYA-4574 / FGSC 10173) (Glume blotch fungus).